We begin with the raw amino-acid sequence, 59 residues long: Large ribosomal subunit protein bL32 (59 aa).

The segment covering 1-16 (MAVPKRKTSPSKRGMR) has biased composition (basic residues). Residues 1–59 (MAVPKRKTSPSKRGMRRSADALKAPTYVEDKNSGELRRPHHIDLKSGMYRGRQVLEAKE) form a disordered region. Over residues 28–44 (VEDKNSGELRRPHHIDL) the composition is skewed to basic and acidic residues.

It belongs to the bacterial ribosomal protein bL32 family.

The polypeptide is Large ribosomal subunit protein bL32 (Brucella anthropi (strain ATCC 49188 / DSM 6882 / CCUG 24695 / JCM 21032 / LMG 3331 / NBRC 15819 / NCTC 12168 / Alc 37) (Ochrobactrum anthropi)).